A 162-amino-acid chain; its full sequence is Putative ankyrin repeat protein R664 (162 aa).

3 ANK repeats span residues 10–40 (KKLVEFLLYSNQDCSLIVIDALITIGANVNY), 47–78 (NDTPILSVITKTSESNPETVKLLLDKGADVNY), and 82–111 (YHETALMRTIKYGNFGIAKILLDYGANPYL).

This is Putative ankyrin repeat protein R664 from Acanthamoeba polyphaga mimivirus (APMV).